Consider the following 256-residue polypeptide: Small ribosomal subunit protein eS1B (256 aa).

At Ala-2 the chain carries N-acetylalanine; partial.

Belongs to the eukaryotic ribosomal protein eS1 family. Component of the small ribosomal subunit. Mature ribosomes consist of a small (40S) and a large (60S) subunit. The 40S subunit contains about 33 different proteins and 1 molecule of RNA (18S). The 60S subunit contains about 49 different proteins and 3 molecules of RNA (25S, 5.8S and 5S).

It localises to the cytoplasm. This is Small ribosomal subunit protein eS1B from Clavispora lusitaniae (strain ATCC 42720) (Yeast).